Here is a 504-residue protein sequence, read N- to C-terminus: Glycerol kinase (504 aa).

Thr13 is an ADP binding site. Positions 13, 14, and 15 each coordinate ATP. Sn-glycerol 3-phosphate is bound at residue Thr13. ADP is bound at residue Arg17. Arg83, Glu84, and Tyr135 together coordinate sn-glycerol 3-phosphate. 3 residues coordinate glycerol: Arg83, Glu84, and Tyr135. At His231 the chain carries Phosphohistidine; by HPr. Asp245 serves as a coordination point for sn-glycerol 3-phosphate. The glycerol site is built by Asp245 and Gln246. ADP is bound by residues Thr267 and Gly310. ATP contacts are provided by Thr267, Gly310, Gln314, and Gly411. ADP is bound by residues Gly411 and Asn415.

It belongs to the FGGY kinase family. Homotetramer and homodimer (in equilibrium). In terms of processing, the phosphoenolpyruvate-dependent sugar phosphotransferase system (PTS), including enzyme I, and histidine-containing protein (HPr) are required for the phosphorylation, which leads to the activation of the enzyme.

It catalyses the reaction glycerol + ATP = sn-glycerol 3-phosphate + ADP + H(+). The protein operates within polyol metabolism; glycerol degradation via glycerol kinase pathway; sn-glycerol 3-phosphate from glycerol: step 1/1. Its activity is regulated as follows. Activated by phosphorylation and inhibited by fructose 1,6-bisphosphate (FBP). Key enzyme in the regulation of glycerol uptake and metabolism. Catalyzes the phosphorylation of glycerol to yield sn-glycerol 3-phosphate. In Ligilactobacillus salivarius (strain UCC118) (Lactobacillus salivarius), this protein is Glycerol kinase.